We begin with the raw amino-acid sequence, 132 residues long: MGRDTIANIITCIRNADMDKKRMVRIASTNITENIVKIILQEGFIENVRKHRENNKNFLVLTLRHKRNRKGTYRKTLKRISRSGLRIYSNYQRIPRISGGMGVVILSTSRGIMTDREARREGIGGEILCYIW.

This sequence belongs to the universal ribosomal protein uS8 family. In terms of assembly, part of the 30S ribosomal subunit.

The protein resides in the plastid. Its subcellular location is the chloroplast. One of the primary rRNA binding proteins, it binds directly to 16S rRNA central domain where it helps coordinate assembly of the platform of the 30S subunit. In Amborella trichopoda, this protein is Small ribosomal subunit protein uS8c (rps8).